The following is a 299-amino-acid chain: UBX domain-containing protein 1 (299 aa).

3 disordered regions span residues 39 to 61 (AGVP…SGAP), 127 to 176 (KAKL…NEDE), and 191 to 218 (EARK…APPK). Low complexity predominate over residues 46–61 (DAPAQAAPGAADSGAP). Residues 111-179 (AKVLEIREKI…REKNEDEIAR (69 aa)) adopt a coiled-coil conformation. Basic and acidic residues predominate over residues 128–176 (AKLEAEENREKEKKRREDGKAMISHKEAARDREIREAAQDRRREKNEDE). Residues 201 to 213 (PVPEAKPAPSAAP) are compositionally biased toward low complexity. Positions 218–295 (KDYSTTTLQF…NLVPSANVIL (78 aa)) constitute a UBX domain.

Interacts with cdc-48.1 (via N-terminus) and cdc-48.2 (via N-terminus) in vitro; the interaction with cdc-48.1 is not detected in vivo. In terms of tissue distribution, expressed in the germline (at protein level). Expressed in spermatocytes but not in mature sperm (at protein level). Ubiquitously expressed. Predominantly expressed in the spermatheca.

The protein resides in the cytoplasm. The protein localises to the perinuclear region. In terms of biological role, ubiquitin-binding protein which acts as an adapter for ATPase cdc-48.1 and/or cdc-48.2, conferring substrate specificity. Together with ubxn-2 and ubxn-3, plays a role in hermaphrodite spermatogenesis probably by promoting the degradation of sex determination terminal factor tra-1. The chain is UBX domain-containing protein 1 from Caenorhabditis elegans.